The primary structure comprises 231 residues: uncharacterized protein (231 aa).

Residues 86–106 (LIILFVIGLIITIIGLLMYEP) form a helical membrane-spanning segment.

It localises to the membrane. This is an uncharacterized protein from Methanocaldococcus jannaschii (strain ATCC 43067 / DSM 2661 / JAL-1 / JCM 10045 / NBRC 100440) (Methanococcus jannaschii).